The primary structure comprises 137 residues: Urease subunit beta (137 aa).

The disordered stretch occupies residues 113–137; sequence NGHPNAGVKNDEGKQNANKESGDNR.

The protein belongs to the urease beta subunit family. As to quaternary structure, heterotrimer of UreA (gamma), UreB (beta) and UreC (alpha) subunits. Three heterotrimers associate to form the active enzyme.

It is found in the cytoplasm. It catalyses the reaction urea + 2 H2O + H(+) = hydrogencarbonate + 2 NH4(+). It functions in the pathway nitrogen metabolism; urea degradation; CO(2) and NH(3) from urea (urease route): step 1/1. The sequence is that of Urease subunit beta from Staphylococcus carnosus (strain TM300).